The chain runs to 280 residues: Shikimate dehydrogenase (NADP(+)) (280 aa).

Shikimate contacts are provided by residues 15-17 (SLS) and T62. The active-site Proton acceptor is K66. Residues N88 and D104 each contribute to the shikimate site. Residues 128-132 (GAGGA), 151-156 (NRTEER), and I222 contribute to the NADP(+) site. Residue Y224 coordinates shikimate. G245 lines the NADP(+) pocket.

This sequence belongs to the shikimate dehydrogenase family. Homodimer.

It catalyses the reaction shikimate + NADP(+) = 3-dehydroshikimate + NADPH + H(+). It participates in metabolic intermediate biosynthesis; chorismate biosynthesis; chorismate from D-erythrose 4-phosphate and phosphoenolpyruvate: step 4/7. In terms of biological role, involved in the biosynthesis of the chorismate, which leads to the biosynthesis of aromatic amino acids. Catalyzes the reversible NADPH linked reduction of 3-dehydroshikimate (DHSA) to yield shikimate (SA). The sequence is that of Shikimate dehydrogenase (NADP(+)) from Methanosarcina mazei (strain ATCC BAA-159 / DSM 3647 / Goe1 / Go1 / JCM 11833 / OCM 88) (Methanosarcina frisia).